A 241-amino-acid chain; its full sequence is Orotidine 5'-phosphate decarboxylase (241 aa).

Substrate is bound by residues Asp16, Lys37, Asp64–Thr73, Thr128, Arg190, Gln199, Gly219, and Arg220. Catalysis depends on Lys66, which acts as the Proton donor.

This sequence belongs to the OMP decarboxylase family. Type 1 subfamily. Homodimer.

The catalysed reaction is orotidine 5'-phosphate + H(+) = UMP + CO2. It participates in pyrimidine metabolism; UMP biosynthesis via de novo pathway; UMP from orotate: step 2/2. Functionally, catalyzes the decarboxylation of orotidine 5'-monophosphate (OMP) to uridine 5'-monophosphate (UMP). This is Orotidine 5'-phosphate decarboxylase from Prochlorococcus marinus (strain NATL1A).